Here is a 177-residue protein sequence, read N- to C-terminus: Large ribosomal subunit protein uL6 (177 aa).

Belongs to the universal ribosomal protein uL6 family. As to quaternary structure, part of the 50S ribosomal subunit.

In terms of biological role, this protein binds to the 23S rRNA, and is important in its secondary structure. It is located near the subunit interface in the base of the L7/L12 stalk, and near the tRNA binding site of the peptidyltransferase center. The protein is Large ribosomal subunit protein uL6 of Methanosarcina barkeri (strain Fusaro / DSM 804).